The following is a 181-amino-acid chain: Anthrone oxygenase encC (181 aa).

Transmembrane regions (helical) follow at residues 1–21, 65–81, 88–108, and 153–173; these read MASV…WLSG, QIAA…AWCA, LLYG…LLFM, and FLAG…LFAA.

This sequence belongs to the anthrone oxygenase family. As to expression, endocrocin is specifically produced in conidia.

It is found in the membrane. Its function is as follows. Anthrone oxygenase; part of the gene cluster that mediates the biosynthesis of endocrocin, a simple anthraquinone interesting for many biotechnological applications. The pathway begins with the synthesis of atrochrysone thioester by the polyketide synthase (PKS) encA. The atrochrysone carboxyl ACP thioesterase encB then breaks the thioester bond and releases the atrochrysone carboxylic acid from encA. The atrochrysone carboxylic acid is then converted to endocrocin anthrone which is further oxidized into endocrocin by the anthrone oxygenase encC. The exact function of encD has not been identified yet, but it negatively regulates endocrocin production, likely through the modification of endocrocin itself. This is Anthrone oxygenase encC from Aspergillus fumigatus (strain ATCC MYA-4609 / CBS 101355 / FGSC A1100 / Af293) (Neosartorya fumigata).